Consider the following 214-residue polypeptide: Rho-related GTP-binding protein RhoJ (214 aa).

Residues Cys-3 and Cys-11 are each lipidated (S-palmitoyl cysteine). GTP-binding positions include 31-36, 46-53, 75-79, 133-136, and 177-178; these read AVGKTC, FPEEYVPT, DTAGQ, TQID, and AL. The Effector region motif lies at 50–58; it reads YVPTVFDHY. Cys-211 is subject to Cysteine methyl ester. Cys-211 carries S-farnesyl cysteine lipidation. A propeptide spans 212 to 214 (removed in mature form); it reads AII.

This sequence belongs to the small GTPase superfamily. Rho family. Interacts with the CRIB domains of proteins such as Pak1 and Was/Wasp. Interacts with GLUL. In terms of processing, palmitoylated; regulates localization to the plasma membrane and may be mediated by GLUL. As to expression, highly expressed in heart with moderate levels in lung and liver. Very low levels detected in brain, spleen, skeletal muscle, kidney and testis.

The protein localises to the cell membrane. Plasma membrane-associated small GTPase specifically involved in angiogenesis. Required for endothelial cell migration during vascular development via its interaction with GLUL. Elicits the formation of F-actin-rich structures, thereby regulating endothelial cell migration. This is Rho-related GTP-binding protein RhoJ (Rhoj) from Mus musculus (Mouse).